Consider the following 255-residue polypeptide: Tryptophan synthase alpha chain (255 aa).

Active-site proton acceptor residues include Glu-49 and Asp-60.

It belongs to the TrpA family. As to quaternary structure, tetramer of two alpha and two beta chains.

It carries out the reaction (1S,2R)-1-C-(indol-3-yl)glycerol 3-phosphate + L-serine = D-glyceraldehyde 3-phosphate + L-tryptophan + H2O. The protein operates within amino-acid biosynthesis; L-tryptophan biosynthesis; L-tryptophan from chorismate: step 5/5. The alpha subunit is responsible for the aldol cleavage of indoleglycerol phosphate to indole and glyceraldehyde 3-phosphate. The chain is Tryptophan synthase alpha chain from Desulfovibrio desulfuricans (strain ATCC 27774 / DSM 6949 / MB).